The primary structure comprises 269 residues: Phosphonoacetaldehyde hydrolase (269 aa).

Aspartate 10 acts as the Nucleophile in catalysis. The Mg(2+) site is built by aspartate 10 and alanine 12. The active-site Schiff-base intermediate with substrate is the lysine 52. Aspartate 186 provides a ligand contact to Mg(2+).

It belongs to the HAD-like hydrolase superfamily. PhnX family. In terms of assembly, homodimer. It depends on Mg(2+) as a cofactor.

The enzyme catalyses phosphonoacetaldehyde + H2O = acetaldehyde + phosphate + H(+). Involved in phosphonate degradation. This is Phosphonoacetaldehyde hydrolase from Salmonella heidelberg (strain SL476).